The primary structure comprises 753 residues: Polyribonucleotide nucleotidyltransferase (753 aa).

Residues D543 and D549 each contribute to the Mg(2+) site. Residues 609-668 (PRITTVKIPVAKIGELIGPKGKNINALTEETGANISIEDDGTVFISAADGASAEAAIEKI) enclose the KH domain. One can recognise an S1 motif domain in the interval 680-749 (GERFLGTVVK…NRGKISLVPV (70 aa)).

This sequence belongs to the polyribonucleotide nucleotidyltransferase family. It depends on Mg(2+) as a cofactor.

The protein localises to the cytoplasm. The catalysed reaction is RNA(n+1) + phosphate = RNA(n) + a ribonucleoside 5'-diphosphate. In terms of biological role, involved in mRNA degradation. Catalyzes the phosphorolysis of single-stranded polyribonucleotides processively in the 3'- to 5'-direction. The polypeptide is Polyribonucleotide nucleotidyltransferase (Corynebacterium glutamicum (strain R)).